Reading from the N-terminus, the 398-residue chain is Riboflavin biosynthesis protein RibBA (398 aa).

The segment at 1–199 (MFHPIEEALE…IKDLIEYRYN (199 aa)) is DHBP synthase. D-ribulose 5-phosphate contacts are provided by residues 26–27 (RE), D31, 138–142 (RAGHT), and E162. E27 contributes to the Mg(2+) binding site. H141 contributes to the Mg(2+) binding site. The segment at 200-398 (ITTLVNREVD…MKKLGHLLHF (199 aa)) is GTP cyclohydrolase II. 251 to 255 (RVHSE) serves as a coordination point for GTP. Residues C256, C267, and C269 each contribute to the Zn(2+) site. GTP contacts are provided by residues Q272, 294-296 (EGR), and T316. D328 acts as the Proton acceptor; for GTP cyclohydrolase activity in catalysis. The active-site Nucleophile; for GTP cyclohydrolase activity is R330. Residues T351 and K356 each coordinate GTP.

It in the N-terminal section; belongs to the DHBP synthase family. In the C-terminal section; belongs to the GTP cyclohydrolase II family. Mg(2+) serves as cofactor. Mn(2+) is required as a cofactor. It depends on Zn(2+) as a cofactor.

The enzyme catalyses D-ribulose 5-phosphate = (2S)-2-hydroxy-3-oxobutyl phosphate + formate + H(+). It catalyses the reaction GTP + 4 H2O = 2,5-diamino-6-hydroxy-4-(5-phosphoribosylamino)-pyrimidine + formate + 2 phosphate + 3 H(+). The protein operates within cofactor biosynthesis; riboflavin biosynthesis; 2-hydroxy-3-oxobutyl phosphate from D-ribulose 5-phosphate: step 1/1. Its pathway is cofactor biosynthesis; riboflavin biosynthesis; 5-amino-6-(D-ribitylamino)uracil from GTP: step 1/4. Functionally, catalyzes the conversion of D-ribulose 5-phosphate to formate and 3,4-dihydroxy-2-butanone 4-phosphate. In terms of biological role, catalyzes the conversion of GTP to 2,5-diamino-6-ribosylamino-4(3H)-pyrimidinone 5'-phosphate (DARP), formate and pyrophosphate. The sequence is that of Riboflavin biosynthesis protein RibBA from Bacillus velezensis (strain DSM 23117 / BGSC 10A6 / LMG 26770 / FZB42) (Bacillus amyloliquefaciens subsp. plantarum).